A 241-amino-acid chain; its full sequence is Methylthioribulose-1-phosphate dehydratase (241 aa).

The tract at residues 1–20 (MSAIKDERNNDHLVQSHDPE) is disordered. Substrate is bound at residue Cys-100. Zn(2+)-binding residues include His-117 and His-119. The Proton donor/acceptor role is filled by Glu-146. His-202 serves as a coordination point for Zn(2+).

This sequence belongs to the aldolase class II family. MtnB subfamily. Requires Zn(2+) as cofactor.

Its subcellular location is the cytoplasm. It carries out the reaction 5-(methylsulfanyl)-D-ribulose 1-phosphate = 5-methylsulfanyl-2,3-dioxopentyl phosphate + H2O. Its pathway is amino-acid biosynthesis; L-methionine biosynthesis via salvage pathway; L-methionine from S-methyl-5-thio-alpha-D-ribose 1-phosphate: step 2/6. Catalyzes the dehydration of methylthioribulose-1-phosphate (MTRu-1-P) into 2,3-diketo-5-methylthiopentyl-1-phosphate (DK-MTP-1-P). This Blastomyces gilchristii (strain SLH14081) (Blastomyces dermatitidis) protein is Methylthioribulose-1-phosphate dehydratase.